Reading from the N-terminus, the 230-residue chain is Aspartate and serine-rich protein (230 aa).

N-linked (GlcNAc...) asparagine glycosylation is found at N17, N132, and N139. A disordered region spans residues 112–230 (LNGGATAGGV…DSDSNDTDSD (119 aa)). Positions 126–140 (DTDESSNDTDEDSND) are enriched in acidic residues. A compositionally biased stretch (basic and acidic residues) spans 141 to 161 (SDSKDTDSDSKDTDSDSKDSD). N163 and N170 each carry an N-linked (GlcNAc...) asparagine glycan. Positions 173-223 (DSKDTDSDSKDSDSKDTDSDSKDTDSDSKDSDSKDTDSDSKDTDSDSKDSD) are enriched in basic and acidic residues. N-linked (GlcNAc...) asparagine glycosylation is present at N225.

In terms of tissue distribution, component of the acid-insoluble organic matrix of calcified layers of the shell (at protein level).

It is found in the secreted. The protein is Aspartate and serine-rich protein of Lottia gigantea (Giant owl limpet).